Reading from the N-terminus, the 250-residue chain is 5'/3'-nucleotidase SurE (250 aa).

A divalent metal cation contacts are provided by Asp8, Asp9, Ser39, and Asn92.

This sequence belongs to the SurE nucleotidase family. A divalent metal cation is required as a cofactor.

The protein resides in the cytoplasm. The enzyme catalyses a ribonucleoside 5'-phosphate + H2O = a ribonucleoside + phosphate. It carries out the reaction a ribonucleoside 3'-phosphate + H2O = a ribonucleoside + phosphate. It catalyses the reaction [phosphate](n) + H2O = [phosphate](n-1) + phosphate + H(+). In terms of biological role, nucleotidase with a broad substrate specificity as it can dephosphorylate various ribo- and deoxyribonucleoside 5'-monophosphates and ribonucleoside 3'-monophosphates with highest affinity to 3'-AMP. Also hydrolyzes polyphosphate (exopolyphosphatase activity) with the preference for short-chain-length substrates (P20-25). Might be involved in the regulation of dNTP and NTP pools, and in the turnover of 3'-mononucleotides produced by numerous intracellular RNases (T1, T2, and F) during the degradation of various RNAs. The sequence is that of 5'/3'-nucleotidase SurE from Wigglesworthia glossinidia brevipalpis.